The sequence spans 100 residues: MDKSKLFLKSKRSFRRRLPPIGSGDRIDYRNMSLISRFISEQGKILSRRVNRLTLKQQRLITIAIKQARILSSLPFLNNEKQFERTESTPRTTGPRTRKK.

Residues Lys81–Lys100 form a disordered region. Residues Thr89–Lys100 show a composition bias toward low complexity.

The protein belongs to the bacterial ribosomal protein bS18 family. As to quaternary structure, part of the 30S ribosomal subunit.

Its subcellular location is the plastid. It localises to the chloroplast. The polypeptide is Small ribosomal subunit protein bS18c (Nandina domestica (Heavenly bamboo)).